A 356-amino-acid polypeptide reads, in one-letter code: MDFITIDLKERSYPIYFAYDSFDKLGEIVKKHVRSSKTFIITDFNVYPLYFEKLNESLKKSRFDVSYEVIPAGETSKTMEMAQRLLEKAYDYGLLRDSSVIALGGGVVGDIAGFVAATYMRGIDFVQIPTTLLAQVDSSVGGKVAVNLKKGKNIIGAFHQPKMVYIDTAVLNTLDKREILGGLAEIIKYGIIWDFSLFEYIESNIYEILDLEEDKLRHIIKKSCEIKGKIVSLDEKEENLRSILNFGHTIGHAIEALTGYERYIHGEAVAIGMVYACKLALNLGYIDEKYFERIFSLIQRTGLPTDYEDLHKEDIVEAIKLDKKSREAKINFVLLRGLGKAEVTTVKEEEILKVLK.

Residues 106 to 110, 130 to 131, Lys-143, and Lys-152 contribute to the NAD(+) site; these read GVVGD and TT. Zn(2+)-binding residues include Glu-185, His-248, and His-265.

This sequence belongs to the sugar phosphate cyclases superfamily. Dehydroquinate synthase family. The cofactor is Co(2+). Zn(2+) is required as a cofactor. It depends on NAD(+) as a cofactor.

It is found in the cytoplasm. It carries out the reaction 7-phospho-2-dehydro-3-deoxy-D-arabino-heptonate = 3-dehydroquinate + phosphate. Its pathway is metabolic intermediate biosynthesis; chorismate biosynthesis; chorismate from D-erythrose 4-phosphate and phosphoenolpyruvate: step 2/7. Functionally, catalyzes the conversion of 3-deoxy-D-arabino-heptulosonate 7-phosphate (DAHP) to dehydroquinate (DHQ). This chain is 3-dehydroquinate synthase, found in Thermoanaerobacter pseudethanolicus (strain ATCC 33223 / 39E) (Clostridium thermohydrosulfuricum).